A 243-amino-acid chain; its full sequence is Carboxy-S-adenosyl-L-methionine synthase (243 aa).

Residues Y40, 65-67 (GCS), 90-91 (DN), 118-119 (DI), N133, and R200 each bind S-adenosyl-L-methionine.

This sequence belongs to the class I-like SAM-binding methyltransferase superfamily. Cx-SAM synthase family. In terms of assembly, homodimer.

It carries out the reaction prephenate + S-adenosyl-L-methionine = carboxy-S-adenosyl-L-methionine + 3-phenylpyruvate + H2O. Its function is as follows. Catalyzes the conversion of S-adenosyl-L-methionine (SAM) to carboxy-S-adenosyl-L-methionine (Cx-SAM). The polypeptide is Carboxy-S-adenosyl-L-methionine synthase (Shewanella putrefaciens (strain CN-32 / ATCC BAA-453)).